A 150-amino-acid chain; its full sequence is Urease accessory protein UreE (150 aa).

It belongs to the UreE family.

It is found in the cytoplasm. Involved in urease metallocenter assembly. Binds nickel. Probably functions as a nickel donor during metallocenter assembly. The chain is Urease accessory protein UreE from Parasynechococcus marenigrum (strain WH8102).